The sequence spans 423 residues: Kynureninase (423 aa).

Pyridoxal 5'-phosphate is bound by residues Leu105, Ser106, 133–136, Asp218, His221, and Tyr243; that span reads FPSD. Position 244 is an N6-(pyridoxal phosphate)lysine (Lys244). Trp273 and Asn301 together coordinate pyridoxal 5'-phosphate.

It belongs to the kynureninase family. Homodimer. It depends on pyridoxal 5'-phosphate as a cofactor.

The enzyme catalyses L-kynurenine + H2O = anthranilate + L-alanine + H(+). It catalyses the reaction 3-hydroxy-L-kynurenine + H2O = 3-hydroxyanthranilate + L-alanine + H(+). The protein operates within amino-acid degradation; L-kynurenine degradation; L-alanine and anthranilate from L-kynurenine: step 1/1. Its pathway is cofactor biosynthesis; NAD(+) biosynthesis; quinolinate from L-kynurenine: step 2/3. In terms of biological role, catalyzes the cleavage of L-kynurenine (L-Kyn) and L-3-hydroxykynurenine (L-3OHKyn) into anthranilic acid (AA) and 3-hydroxyanthranilic acid (3-OHAA), respectively. The chain is Kynureninase from Xanthomonas euvesicatoria pv. vesicatoria (strain 85-10) (Xanthomonas campestris pv. vesicatoria).